Consider the following 176-residue polypeptide: Adenine phosphoribosyltransferase (176 aa).

Belongs to the purine/pyrimidine phosphoribosyltransferase family. Homodimer.

It is found in the cytoplasm. The enzyme catalyses AMP + diphosphate = 5-phospho-alpha-D-ribose 1-diphosphate + adenine. The protein operates within purine metabolism; AMP biosynthesis via salvage pathway; AMP from adenine: step 1/1. Catalyzes a salvage reaction resulting in the formation of AMP, that is energically less costly than de novo synthesis. This Borreliella burgdorferi (strain ATCC 35210 / DSM 4680 / CIP 102532 / B31) (Borrelia burgdorferi) protein is Adenine phosphoribosyltransferase.